The chain runs to 149 residues: Large ribosomal subunit protein bL9 (149 aa).

The protein belongs to the bacterial ribosomal protein bL9 family.

Binds to the 23S rRNA. This chain is Large ribosomal subunit protein bL9, found in Proteus mirabilis (strain HI4320).